The chain runs to 158 residues: UPF0725 protein At3g57210 (158 aa).

Belongs to the UPF0725 (EMB2204) family.

This Arabidopsis thaliana (Mouse-ear cress) protein is UPF0725 protein At3g57210.